Reading from the N-terminus, the 430-residue chain is Dolichyl-diphosphooligosaccharide--protein glycosyltransferase subunit WBP1 (430 aa).

Positions 1-20 (MRTDWNFFFCILLQAIFVVG) are cleaved as a signal peptide. Residues 24–393 (SRTLVLYDQS…PRSWEISNSW (370 aa)) lie on the Lumenal side of the membrane. N-linked (GlcNAc...) asparagine glycans are attached at residues asparagine 60 and asparagine 332. The chain crosses the membrane as a helical span at residues 394 to 414 (VYISAICGVIVAWIFFVVSFV). At 415 to 430 (TTSSVGKKLETFKKTN) the chain is on the cytoplasmic side.

The protein belongs to the DDOST 48 kDa subunit family. As to quaternary structure, component of the oligosaccharyltransferase (OST) complex, which appears to exist in two assemblies comprising OST1, OST2, OST4, OST5, STT3, SWP1, WPB1, and either OST3 or OST6. OST assembly occurs through the formation of 3 subcomplexes. Subcomplex 1 contains OST1 and OST5, subcomplex 2 contains STT3, OST3, and OST4, and subcomplex 3 contains OST2, WBP1, and SWP1. Interacts with SEC61, SBH1 and SSS1.

The protein localises to the endoplasmic reticulum membrane. It functions in the pathway protein modification; protein glycosylation. Functionally, subunit of the oligosaccharyl transferase (OST) complex that catalyzes the initial transfer of a defined glycan (Glc(3)Man(9)GlcNAc(2) in eukaryotes) from the lipid carrier dolichol-pyrophosphate to an asparagine residue within an Asn-X-Ser/Thr consensus motif in nascent polypeptide chains, the first step in protein N-glycosylation. N-glycosylation occurs cotranslationally and the complex associates with the Sec61 complex at the channel-forming translocon complex that mediates protein translocation across the endoplasmic reticulum (ER). All subunits are required for a maximal enzyme activity. The protein is Dolichyl-diphosphooligosaccharide--protein glycosyltransferase subunit WBP1 (WBP1) of Saccharomyces cerevisiae (strain ATCC 204508 / S288c) (Baker's yeast).